Consider the following 448-residue polypeptide: tRNA(Ile)-lysidine synthase (448 aa).

29–34 (SGGVDS) lines the ATP pocket.

The protein belongs to the tRNA(Ile)-lysidine synthase family.

The protein localises to the cytoplasm. The enzyme catalyses cytidine(34) in tRNA(Ile2) + L-lysine + ATP = lysidine(34) in tRNA(Ile2) + AMP + diphosphate + H(+). In terms of biological role, ligates lysine onto the cytidine present at position 34 of the AUA codon-specific tRNA(Ile) that contains the anticodon CAU, in an ATP-dependent manner. Cytidine is converted to lysidine, thus changing the amino acid specificity of the tRNA from methionine to isoleucine. The protein is tRNA(Ile)-lysidine synthase of Azoarcus sp. (strain BH72).